The primary structure comprises 259 residues: Ribosomal RNA small subunit methyltransferase A (259 aa).

Residues Asn13, Leu15, Gly40, Glu61, Asp85, and Asn103 each coordinate S-adenosyl-L-methionine.

The protein belongs to the class I-like SAM-binding methyltransferase superfamily. rRNA adenine N(6)-methyltransferase family. RsmA subfamily.

The protein resides in the cytoplasm. It catalyses the reaction adenosine(1518)/adenosine(1519) in 16S rRNA + 4 S-adenosyl-L-methionine = N(6)-dimethyladenosine(1518)/N(6)-dimethyladenosine(1519) in 16S rRNA + 4 S-adenosyl-L-homocysteine + 4 H(+). Functionally, specifically dimethylates two adjacent adenosines (A1518 and A1519) in the loop of a conserved hairpin near the 3'-end of 16S rRNA in the 30S particle. May play a critical role in biogenesis of 30S subunits. This is Ribosomal RNA small subunit methyltransferase A from Neisseria meningitidis serogroup B (strain ATCC BAA-335 / MC58).